The following is a 308-amino-acid chain: Glutamyl-Q tRNA(Asp) synthetase (308 aa).

L-glutamate is bound by residues 19 to 23 (RFAPS) and Glu-55. The 'HIGH' region motif lies at 22–32 (PSPSGELHFGS). Zn(2+)-binding residues include Cys-111, Cys-113, Tyr-125, and Cys-129. The L-glutamate site is built by Tyr-182 and Arg-200. Positions 238–242 (KLSKQ) match the 'KMSKS' region motif. Lys-241 is an ATP binding site.

This sequence belongs to the class-I aminoacyl-tRNA synthetase family. GluQ subfamily. The cofactor is Zn(2+).

Catalyzes the tRNA-independent activation of glutamate in presence of ATP and the subsequent transfer of glutamate onto a tRNA(Asp). Glutamate is transferred on the 2-amino-5-(4,5-dihydroxy-2-cyclopenten-1-yl) moiety of the queuosine in the wobble position of the QUC anticodon. This is Glutamyl-Q tRNA(Asp) synthetase from Escherichia coli O157:H7.